A 59-amino-acid chain; its full sequence is Protein NapE (59 aa).

Residues 1–18 (MIDSAKETDRPKHRKRDE) are Cytoplasmic-facing. The chain crosses the membrane as a helical span at residues 19–43 (VIAFLILAVVIWPILSVAIVGGYGF). At 44-59 (LVWMSQIIFGPPGPMH) the chain is on the periplasmic side.

Its subcellular location is the cell inner membrane. In terms of biological role, may be involved in mediating interactions between NapC and a quinol oxidase. In Paracoccus pantotrophus (Thiosphaera pantotropha), this protein is Protein NapE (napE).